A 149-amino-acid chain; its full sequence is Nucleoside diphosphate kinase 1 (149 aa).

ATP-binding residues include Lys9, Phe57, Arg85, Thr91, Arg102, and Asn112. His115 serves as the catalytic Pros-phosphohistidine intermediate.

This sequence belongs to the NDK family. It depends on Mg(2+) as a cofactor. Post-translationally, autophosphorylated.

It catalyses the reaction a 2'-deoxyribonucleoside 5'-diphosphate + ATP = a 2'-deoxyribonucleoside 5'-triphosphate + ADP. It carries out the reaction a ribonucleoside 5'-diphosphate + ATP = a ribonucleoside 5'-triphosphate + ADP. Functionally, major role in the synthesis of nucleoside triphosphates other than ATP. The ATP gamma phosphate is transferred to the NDP beta phosphate via a ping-pong mechanism, using a phosphorylated active-site intermediate. Also exhibits a kinase-like activity towards histone H1. The sequence is that of Nucleoside diphosphate kinase 1 (NDPK1) from Saccharum officinarum (Sugarcane).